The chain runs to 305 residues: Peroxidase A2 (305 aa).

Residue Gln1 is modified to Pyrrolidone carboxylic acid. Asn3 and Asn13 each carry an N-linked (GlcNAc...) asparagine glycan. Intrachain disulfides connect Cys11–Cys91, Cys44–Cys49, Cys97–Cys299, and Cys176–Cys208. His42 (proton acceptor) is an active-site residue. Residues Asp43, Val46, Gly48, Asp50, and Ser52 each coordinate Ca(2+). Pro139 contacts substrate. N-linked (GlcNAc...) asparagine glycosylation occurs at Asn147. Heme b is bound at residue His169. Thr170 lines the Ca(2+) pocket. N-linked (GlcNAc...) asparagine glycosylation is found at Asn185, Asn197, and Asn211. 3 residues coordinate Ca(2+): Asp221, Thr224, and Asp229. A glycan (N-linked (GlcNAc...) asparagine) is linked at Asn267.

This sequence belongs to the peroxidase family. Classical plant (class III) peroxidase subfamily. It depends on Ca(2+) as a cofactor. The cofactor is heme b.

It catalyses the reaction 2 a phenolic donor + H2O2 = 2 a phenolic radical donor + 2 H2O. Its function is as follows. Removal of H(2)O(2), oxidation of toxic reductants, biosynthesis and degradation of lignin, suberization, auxin catabolism, response to environmental stresses such as wounding, pathogen attack and oxidative stress. These functions might be dependent on each isozyme/isoform in each plant tissue. In Armoracia rusticana (Horseradish), this protein is Peroxidase A2 (HRPA2).